The chain runs to 767 residues: DNA topoisomerase 1 (767 aa).

Residues 1–23 (MSGDHLHNDSQIEADFRLNDSHK) are compositionally biased toward basic and acidic residues. The segment at 1-200 (MSGDHLHNDS…DNKKKKAKKE (200 aa)) is disordered. Ser-2 carries the post-translational modification N-acetylserine. Phosphoserine is present on residues Ser-2 and Ser-10. Residues 24–39 (HKDKHKDREHRHKEHK) show a composition bias toward basic residues. A compositionally biased stretch (basic and acidic residues) spans 40–110 (KDKDKDREKS…DAKIKKEKEN (71 aa)). The residue at position 59 (Ser-59) is a Phosphoserine. A Glycyl lysine isopeptide (Lys-Gly) (interchain with G-Cter in SUMO2) cross-link involves residue Lys-103. Residue Lys-105 forms a Glycyl lysine isopeptide (Lys-Gly) (interchain with G-Cter in SUMO); alternate linkage. Residue Lys-105 forms a Glycyl lysine isopeptide (Lys-Gly) (interchain with G-Cter in SUMO2); alternate linkage. Ser-114 is modified (phosphoserine). Residue Lys-119 forms a Glycyl lysine isopeptide (Lys-Gly) (interchain with G-Cter in SUMO); alternate linkage. Lys-119 participates in a covalent cross-link: Glycyl lysine isopeptide (Lys-Gly) (interchain with G-Cter in SUMO2); alternate. Residue Lys-119 forms a Glycyl lysine isopeptide (Lys-Gly) (interchain with G-Cter in SUMO1); alternate linkage. Residues 131 to 168 (PKEDIKPLKRPRDEDDADYKPKKIKTEDIKKEKKRKLE) are compositionally biased toward basic and acidic residues. Glycyl lysine isopeptide (Lys-Gly) (interchain with G-Cter in SUMO2) cross-links involve residues Lys-136 and Lys-150. A Glycyl lysine isopeptide (Lys-Gly) (interchain with G-Cter in SUMO); alternate cross-link involves residue Lys-155. A Glycyl lysine isopeptide (Lys-Gly) (interchain with G-Cter in SUMO2); alternate cross-link involves residue Lys-155. Residues Lys-160 and Lys-166 each participate in a glycyl lysine isopeptide (Lys-Gly) (interchain with G-Cter in SUMO2) cross-link. Lys-174 is covalently cross-linked (Glycyl lysine isopeptide (Lys-Gly) (interchain with G-Cter in SUMO2); alternate). The residue at position 174 (Lys-174) is an N6-acetyllysine; alternate. The span at 181 to 200 (KDKDKKVAEPDNKKKKAKKE) shows a compositional bias: basic and acidic residues. Lys-206 participates in a covalent cross-link: Glycyl lysine isopeptide (Lys-Gly) (interchain with G-Cter in SUMO2). Lys-282 carries the N6-acetyllysine modification. A Glycyl lysine isopeptide (Lys-Gly) (interchain with G-Cter in SUMO2) cross-link involves residue Lys-338. 2 interaction with DNA regions span residues 427–428 (KY) and 490–495 (RAGNEK). Residues 434 to 767 (SSRIKGEKDW…IDMTDEDYEF (334 aa)) form the Topo IB-type catalytic domain. A Phosphoserine; by CK2 modification is found at Ser-508. Lys-551 is covalently cross-linked (Glycyl lysine isopeptide (Lys-Gly) (interchain with G-Cter in SUMO2)). The interaction with DNA stretch occupies residues 587 to 589 (TAK). Glycyl lysine isopeptide (Lys-Gly) (interchain with G-Cter in SUMO2) cross-links involve residues Lys-644, Lys-702, and Lys-714. The active-site O-(3'-phospho-DNA)-tyrosine intermediate is Tyr-725.

Belongs to the type IB topoisomerase family. In terms of assembly, monomer. Interacts with ERCC6. Interacts with TPRN; TPRN interacts with a number of DNA damage response proteins, is recruited to sites of DNA damage and may play a role in DNA damage repair. Sumoylated. Lys-119 is the main site of sumoylation. Sumoylation plays a role in partitioning TOP1 between nucleoli and nucleoplasm. Levels are dramatically increased on camptothecin (CPT) treatment. In terms of processing, phosphorylation at Ser-508 by CK2 increases binding to supercoiled DNA and sensitivity to camptothecin.

The protein resides in the nucleus. Its subcellular location is the nucleolus. It localises to the nucleoplasm. It carries out the reaction ATP-independent breakage of single-stranded DNA, followed by passage and rejoining.. Functionally, releases the supercoiling and torsional tension of DNA introduced during the DNA replication and transcription by transiently cleaving and rejoining one strand of the DNA duplex. Introduces a single-strand break via transesterification at a target site in duplex DNA. The scissile phosphodiester is attacked by the catalytic tyrosine of the enzyme, resulting in the formation of a DNA-(3'-phosphotyrosyl)-enzyme intermediate and the expulsion of a 5'-OH DNA strand. The free DNA strand then rotates around the intact phosphodiester bond on the opposing strand, thus removing DNA supercoils. Finally, in the religation step, the DNA 5'-OH attacks the covalent intermediate to expel the active-site tyrosine and restore the DNA phosphodiester backbone. Regulates the alternative splicing of tissue factor (F3) pre-mRNA in endothelial cells. Involved in the circadian transcription of the core circadian clock component BMAL1 by altering the chromatin structure around the ROR response elements (ROREs) on the BMAL1 promoter. The chain is DNA topoisomerase 1 (Top1) from Rattus norvegicus (Rat).